The primary structure comprises 369 residues: Deoxyhypusine synthase (369 aa).

Serine 78 carries the post-translational modification Phosphoserine. Residues 105-109 (SNLIS), 131-133 (TAG), glutamate 137, and aspartate 238 each bind NAD(+). 136–137 (EE) provides a ligand contact to spermidine. Residue aspartate 243 coordinates spermidine. Glycine 283 is a binding site for NAD(+). Histidine 288 is a spermidine binding site. Residue 308-309 (TA) coordinates NAD(+). Spermidine-binding positions include 314 to 316 (GSD) and 323 to 329 (EAVSWGK). Lysine 329 serves as the catalytic Nucleophile. An NAD(+)-binding site is contributed by 342 to 343 (DA).

This sequence belongs to the deoxyhypusine synthase family. Homotetramer formed by a dimer of dimers. NAD(+) serves as cofactor.

The catalysed reaction is [eIF5A protein]-L-lysine + spermidine = [eIF5A protein]-deoxyhypusine + propane-1,3-diamine. The protein operates within protein modification; eIF5A hypusination. Catalyzes the NAD-dependent oxidative cleavage of spermidine and the subsequent transfer of the butylamine moiety of spermidine to the epsilon-amino group of a critical lysine residue of the eIF-5A precursor protein to form the intermediate deoxyhypusine residue. This is the first step of the post-translational modification of that lysine into an unusual amino acid residue named hypusine. Hypusination is unique to mature eIF-5A factor and is essential for its function. The polypeptide is Deoxyhypusine synthase (DHPS) (Homo sapiens (Human)).